Here is a 639-residue protein sequence, read N- to C-terminus: C-type lectin domain-containing protein 160 (639 aa).

An N-terminal signal peptide occupies residues Met1–Thr19. VWFA domains are found at residues Asp31–Gly178 and Asp289–Val474. A C-type lectin domain is found at Lys491 to Tyr618. The cysteines at positions 594 and 614 are disulfide-linked.

The protein localises to the secreted. The protein is C-type lectin domain-containing protein 160 (clec-160) of Caenorhabditis elegans.